The sequence spans 343 residues: F17g-G fimbrial adhesin (343 aa).

Residues Met1–Ala22 form the signal peptide. Positions Ala23–Val199 are receptor-binding lectin domain. Residues Ala65–Asn66, Asp110–Thr111, and Ser138–Gly141 contribute to the a carbohydrate site. An intrachain disulfide couples Cys75 to Cys132. The tract at residues Thr200–Gln343 is fimbrillin-binding domain. Residues Leu287–Gly307 are disordered. The span at Asn298–Gly307 shows a compositional bias: polar residues.

It belongs to the fimbrial protein family.

The protein resides in the fimbrium. Essential fimbrial adhesion factor that mediates binding to N-acetylglucosamine-containing receptors in the host intestinal microvilli, leading to colonization of the intestinal tissue, and diarrhea or septicemia. Also confers adhesiveness to laminin and basement membranes. May be involved in the initiation of polymerization of fimbrillin monomers during fimbrial filament biogenesis. This chain is F17g-G fimbrial adhesin (f17gG), found in Escherichia coli.